Here is a 213-residue protein sequence, read N- to C-terminus: Large ribosomal subunit protein uL1 (213 aa).

Belongs to the universal ribosomal protein uL1 family. As to quaternary structure, part of the 50S ribosomal subunit.

Its function is as follows. Binds directly to 23S rRNA. Probably involved in E site tRNA release. Protein L1 is also a translational repressor protein, it controls the translation of its operon by binding to its mRNA. The polypeptide is Large ribosomal subunit protein uL1 (Methanococcus voltae).